The primary structure comprises 60 residues: Large ribosomal subunit protein bL32 (60 aa).

Positions 1–16 (MAVPRRKTSPSRRGMR) are enriched in basic residues. Residues 1–60 (MAVPRRKTSPSRRGMRRSADAIKKPTYAEDKDSGELRRPHHLDLKTGMYKGRQVLIKKES) form a disordered region. Residues 17–44 (RSADAIKKPTYAEDKDSGELRRPHHLDL) show a composition bias toward basic and acidic residues.

The protein belongs to the bacterial ribosomal protein bL32 family.

The protein is Large ribosomal subunit protein bL32 of Rhodopseudomonas palustris (strain BisA53).